The primary structure comprises 395 residues: S-adenosylmethionine synthase (395 aa).

Residue histidine 16 coordinates ATP. Aspartate 18 provides a ligand contact to Mg(2+). Position 44 (glutamate 44) interacts with K(+). Residues glutamate 57 and glutamine 100 each coordinate L-methionine. The segment at 100-110 is flexible loop; sequence QSPDIAQGVDR. ATP-binding positions include 167–169, 233–234, aspartate 242, 248–249, alanine 265, and lysine 269; these read DAK, RF, and RK. Residue aspartate 242 participates in L-methionine binding. Lysine 273 contributes to the L-methionine binding site.

Belongs to the AdoMet synthase family. As to quaternary structure, homotetramer; dimer of dimers. Mg(2+) serves as cofactor. The cofactor is K(+).

The protein resides in the cytoplasm. It catalyses the reaction L-methionine + ATP + H2O = S-adenosyl-L-methionine + phosphate + diphosphate. It functions in the pathway amino-acid biosynthesis; S-adenosyl-L-methionine biosynthesis; S-adenosyl-L-methionine from L-methionine: step 1/1. In terms of biological role, catalyzes the formation of S-adenosylmethionine (AdoMet) from methionine and ATP. The overall synthetic reaction is composed of two sequential steps, AdoMet formation and the subsequent tripolyphosphate hydrolysis which occurs prior to release of AdoMet from the enzyme. The polypeptide is S-adenosylmethionine synthase (Burkholderia ambifaria (strain MC40-6)).